Consider the following 205-residue polypeptide: High frequency lysogenization protein HflD homolog (205 aa).

Belongs to the HflD family.

It localises to the cytoplasm. Its subcellular location is the cell inner membrane. The protein is High frequency lysogenization protein HflD homolog of Shewanella piezotolerans (strain WP3 / JCM 13877).